A 199-amino-acid polypeptide reads, in one-letter code: Ribosomal RNA large subunit methyltransferase E (199 aa).

S-adenosyl-L-methionine is bound by residues Gly53, Trp55, Asp73, Asp92, and Asp114. The active-site Proton acceptor is the Lys154.

This sequence belongs to the class I-like SAM-binding methyltransferase superfamily. RNA methyltransferase RlmE family.

It is found in the cytoplasm. It carries out the reaction uridine(2552) in 23S rRNA + S-adenosyl-L-methionine = 2'-O-methyluridine(2552) in 23S rRNA + S-adenosyl-L-homocysteine + H(+). Its function is as follows. Specifically methylates the uridine in position 2552 of 23S rRNA at the 2'-O position of the ribose in the fully assembled 50S ribosomal subunit. In Treponema denticola (strain ATCC 35405 / DSM 14222 / CIP 103919 / JCM 8153 / KCTC 15104), this protein is Ribosomal RNA large subunit methyltransferase E.